The sequence spans 399 residues: Putative 3'-5' exonuclease R431 (399 aa).

The region spanning 118 to 297 is the 3'-5' exonuclease domain; it reads FQIVDNWIEN…IYNELQLMTN (180 aa). One can recognise an R3H domain in the interval 335–399; that stretch reads ERRLKSIESK…NKYVIITRHC (65 aa).

In Acanthamoeba polyphaga (Amoeba), this protein is Putative 3'-5' exonuclease R431.